A 366-amino-acid polypeptide reads, in one-letter code: Protein RecA (366 aa).

An ATP-binding site is contributed by 81–88 (GPESSGKT).

It belongs to the RecA family.

It localises to the cytoplasm. Functionally, can catalyze the hydrolysis of ATP in the presence of single-stranded DNA, the ATP-dependent uptake of single-stranded DNA by duplex DNA, and the ATP-dependent hybridization of homologous single-stranded DNAs. It interacts with LexA causing its activation and leading to its autocatalytic cleavage. The sequence is that of Protein RecA from Leptospira interrogans serogroup Icterohaemorrhagiae serovar copenhageni (strain Fiocruz L1-130).